Reading from the N-terminus, the 214-residue chain is Nucleoside triphosphate pyrophosphatase (214 aa).

The active-site Proton acceptor is the Asp79.

It belongs to the Maf family. It depends on a divalent metal cation as a cofactor.

Its subcellular location is the cytoplasm. It carries out the reaction a ribonucleoside 5'-triphosphate + H2O = a ribonucleoside 5'-phosphate + diphosphate + H(+). It catalyses the reaction a 2'-deoxyribonucleoside 5'-triphosphate + H2O = a 2'-deoxyribonucleoside 5'-phosphate + diphosphate + H(+). Its function is as follows. Nucleoside triphosphate pyrophosphatase. May have a dual role in cell division arrest and in preventing the incorporation of modified nucleotides into cellular nucleic acids. In Rhodococcus opacus (strain B4), this protein is Nucleoside triphosphate pyrophosphatase.